The sequence spans 442 residues: ATP-dependent protease ATPase subunit HslU (442 aa).

Residues Ile18 and 60-65 (GVGKTE) each bind ATP. The segment at 136–157 (LPKPKNDWESTETDSSSNTRQV) is disordered. Residues Asp255, Glu320, and Arg392 each coordinate ATP.

This sequence belongs to the ClpX chaperone family. HslU subfamily. As to quaternary structure, a double ring-shaped homohexamer of HslV is capped on each side by a ring-shaped HslU homohexamer. The assembly of the HslU/HslV complex is dependent on binding of ATP.

The protein localises to the cytoplasm. In terms of biological role, ATPase subunit of a proteasome-like degradation complex; this subunit has chaperone activity. The binding of ATP and its subsequent hydrolysis by HslU are essential for unfolding of protein substrates subsequently hydrolyzed by HslV. HslU recognizes the N-terminal part of its protein substrates and unfolds these before they are guided to HslV for hydrolysis. The chain is ATP-dependent protease ATPase subunit HslU from Shewanella baltica (strain OS185).